Reading from the N-terminus, the 364-residue chain is MNRATATINVTALKHNLSQIKALAPKSLAWAMIKSNGYGHGLVRVAKALSDANAFGVACIDEALTLREVGIKSPIIVMKGFYNEAELSQFARHRLGAVIHCSDQVSLLEKTNLTSSLSVWLKIDTGMNRLGFSVEQSPAVYNQLKTSSSIQKPIGLMTHLADADNENKTFTELQIKRFFSVTEKMIGPKSIVNSAGFFAYPNALVDWIRPGIILYGISPFGINYNSFKEKIEKKFRPVMTLSAKIIAIKNRRQNDSVGYGCTWSCSEDMPIAIVSIGYGDGYPRHAPSGTPVLLNGKICPLIGRVSMDMIAIDLRSQPNAQVGDDVILWGEGLPVEIIAEKAGTIAYELLCKITQRVQFIEIEK.

Lys-34 acts as the Proton acceptor; specific for D-alanine in catalysis. Lys-34 is modified (N6-(pyridoxal phosphate)lysine). Substrate is bound at residue Arg-129. Tyr-259 (proton acceptor; specific for L-alanine) is an active-site residue. Substrate is bound at residue Met-307.

The protein belongs to the alanine racemase family. Requires pyridoxal 5'-phosphate as cofactor.

The enzyme catalyses L-alanine = D-alanine. It functions in the pathway amino-acid biosynthesis; D-alanine biosynthesis; D-alanine from L-alanine: step 1/1. Its function is as follows. Catalyzes the interconversion of L-alanine and D-alanine. May also act on other amino acids. The protein is Alanine racemase (alr) of Coxiella burnetii (strain RSA 331 / Henzerling II).